The sequence spans 124 residues: Small ribosomal subunit protein uS13 (124 aa).

Residues 98–124 are disordered; that stretch reads VRGQRTRCNARTRKGPRKTVGAKRKEK.

This sequence belongs to the universal ribosomal protein uS13 family. As to quaternary structure, part of the 30S ribosomal subunit. Forms a loose heterodimer with protein S19. Forms two bridges to the 50S subunit in the 70S ribosome.

Functionally, located at the top of the head of the 30S subunit, it contacts several helices of the 16S rRNA. In the 70S ribosome it contacts the 23S rRNA (bridge B1a) and protein L5 of the 50S subunit (bridge B1b), connecting the 2 subunits; these bridges are implicated in subunit movement. Contacts the tRNAs in the A and P-sites. This Dictyoglomus thermophilum (strain ATCC 35947 / DSM 3960 / H-6-12) protein is Small ribosomal subunit protein uS13.